We begin with the raw amino-acid sequence, 106 residues long: Large ribosomal subunit protein eL42 (106 aa).

The protein belongs to the eukaryotic ribosomal protein eL42 family.

The sequence is that of Large ribosomal subunit protein eL42 (RPL44) from Cyberlindnera jadinii (Torula yeast).